Reading from the N-terminus, the 371-residue chain is Protein maelstrom 1 (371 aa).

The HMG box DNA-binding region spans 2 to 68 (AQNKPNAFMA…VLERESKTER (67 aa)).

The protein belongs to the maelstrom family.

The protein localises to the cytoplasm. Its subcellular location is the nucleus. Its function is as follows. Involved both in the piRNA and miRNA metabolic processes. As a component of the meiotic nuage, plays a central role during oogenesis by repressing transposable elements and preventing their mobilization, which is essential for the germline integrity. Repression of transposable elements is mediated via the piRNA metabolic process, which mediates the repression of transposable elements during meiosis by forming complexes composed of piRNAs and Piwi proteins and governs the repression of transposons. As a nuclear component, it is required for proper differentiation in the germline stem cell (GSC) lineage by repressing microRNA-7 (miR-7), thereby acting as an indirect regulator of bag-of-marbles (Bam). Acts by binding to the promoter of miR-7 gene and repressing its expression; miR-7 repression alleviates the Bam repression by miR-7, thereby allowing differentiation in the germline stem cell (GSC) lineage. This chain is Protein maelstrom 1 (mael1), found in Drosophila pseudoobscura pseudoobscura (Fruit fly).